Consider the following 191-residue polypeptide: Thymidine kinase (191 aa).

Residues 15–22 (GPMYSGKT) and 88–91 (DEAQ) each bind ATP. The active-site Proton acceptor is E89. Zn(2+)-binding residues include C145, C148, C183, and C186.

This sequence belongs to the thymidine kinase family. In terms of assembly, homotetramer.

Its subcellular location is the cytoplasm. It carries out the reaction thymidine + ATP = dTMP + ADP + H(+). The chain is Thymidine kinase from Clostridium botulinum (strain Loch Maree / Type A3).